The following is a 366-amino-acid chain: MATTAQKIKEVEDEMAKTQKNKATAKHLGMLKAKLAKLKRELITPTGGGGGGGLGFDVARTGIGTVGFIGFPSVGKSTLMTQLTGTRSEAAAYEFTTLTTVPGVLQYNGAKIQILDLPGIIEGAKDGRGRGKQVITVARTCNLIFIVLDVLKPMSHKRIIEEELEGFGIRLNKEPPNIVFKKKERGGINITNTVPLTHIDLDEIRAVCSEYRVNSADIAFRCDATIDDLIDVLEGNRVYIPALYVLNKIDSISIEELDLIDRIPNAVPICGNRGWNIDELKETMWDYLNLVRVYTRPRGLEPDYSEPVILRTGHSTVEDFCNNIHSSIKSQFKHAYVWGKSVPYPGMRVGLSHVLLDEDVVTIVKK.

Positions 64-289 (GTVGFIGFPS…LKETMWDYLN (226 aa)) constitute an OBG-type G domain. GTP contacts are provided by residues 70 to 77 (GFPSVGKS), 116 to 120 (DLPGI), and 247 to 250 (NKID). The TGS domain maps to 289–365 (NLVRVYTRPR…LDEDVVTIVK (77 aa)).

Belongs to the TRAFAC class OBG-HflX-like GTPase superfamily. OBG GTPase family.

This is an uncharacterized protein from Schizosaccharomyces pombe (strain 972 / ATCC 24843) (Fission yeast).